The sequence spans 57 residues: Protein YnaL (57 aa).

A disordered region spans residues 7 to 57 (LQIPVPEPIPGDPVPVPDPIPRPQPMPDPPPDEEPIKLSHRERRSARIRAC). Residues 11-35 (VPEPIPGDPVPVPDPIPRPQPMPDP) are compositionally biased toward pro residues. Basic residues predominate over residues 46-57 (HRERRSARIRAC).

The sequence is that of Protein YnaL from Escherichia coli (strain K12).